A 550-amino-acid chain; its full sequence is O-phosphoserine--tRNA(Cys) ligase (550 aa).

Residues 1–32 (MRFNPQDWKEKSHTNFEGAWHDGPSVITPPGE) are disordered. Residues 212–214 (HMT), 257–259 (SAS), 299–300 (YY), and asparagine 342 contribute to the substrate site.

The protein belongs to the class-II aminoacyl-tRNA synthetase family. O-phosphoseryl-tRNA(Cys) synthetase subfamily. In terms of assembly, homotetramer. Interacts with SepCysS.

The catalysed reaction is tRNA(Cys) + O-phospho-L-serine + ATP = O-phospho-L-seryl-tRNA(Cys) + AMP + diphosphate. Catalyzes the attachment of O-phosphoserine (Sep) to tRNA(Cys). This chain is O-phosphoserine--tRNA(Cys) ligase, found in Methanoregula boonei (strain DSM 21154 / JCM 14090 / 6A8).